The primary structure comprises 713 residues: MIEYRKSVTVHGREIGLSTGVLAQLAGGSVLVQSGETAVLVTATMASKPREGIDFFPLLVDYEERLYAAGRIPGSFVRREGRPPEKAILAARLIDRPLRPLFPKGFINDVQIVATVLALDMNVPPDILAILGASTATMLAGIPFDGPVAATRVGLMGDDFIINPTYKEIEEGELDLVVAGTKNGIMMVEAGANCLPEEDIIDAIDYGYEAVQAMLTAQEEFIRDLKIEPMAFVAPANDPVLVSFVEEKASEAVAEVLRSFELSKDERDAKLDAIEAELGTTFAGLGEEDPLREKAAANASKLPALFKSTTKKLMRKQILVEGKRVDGRSLDEVRPISSAVRVIPRVHGCGLFTRGTTQVLSVVTLGTASDAQELDDLHPDDSKRYMHHYNFPGFSVGEVKPLRGVGRREVGHGALAERAIVPILPEHEQFPYVIRVVSEVLSSNGSTSMGSVCASTLALMDAGVPIREPVSGVAMGLIKEGDEVRILTDIQGIEDFLGDMDFKVAGTRDGITALQMDIKIQGITLQILEAAIQQSKAGRLHILEKMLIAIDKPRVELSPYAPRLLTLKIPVDMIGLVIGPGGKTIKRIVEETGAKVDIEDDGTVVVSSIDGAKALAAKQIIEGMTRTVEVDKVYLGTVTRIIPNLGAFVEVMPGKEGLVHISQLAEHRVRKVEDELNVGDEVVVKVKEIDQKGRINLTRRGIHPSEVEEARGQ.

Mg(2+) is bound by residues D495 and D501. The region spanning 562–621 (PRLLTLKIPVDMIGLVIGPGGKTIKRIVEETGAKVDIEDDGTVVVSSIDGAKALAAKQII) is the KH domain. In terms of domain architecture, S1 motif spans 631–700 (DKVYLGTVTR…QKGRINLTRR (70 aa)).

This sequence belongs to the polyribonucleotide nucleotidyltransferase family. The cofactor is Mg(2+).

Its subcellular location is the cytoplasm. The enzyme catalyses RNA(n+1) + phosphate = RNA(n) + a ribonucleoside 5'-diphosphate. Involved in mRNA degradation. Catalyzes the phosphorolysis of single-stranded polyribonucleotides processively in the 3'- to 5'-direction. In Gloeobacter violaceus (strain ATCC 29082 / PCC 7421), this protein is Polyribonucleotide nucleotidyltransferase.